The sequence spans 414 residues: Seminal vesicle secretory protein 2 (414 aa).

A signal peptide spans 1-22 (MKSSVFILSLFLLLERQAAVVG). Position 23 is a pyrrolidone carboxylic acid (Gln23). Repeat copies occupy residues 108–120 (ESQI…VKSS), 127–139 (GSQL…VKSS), 140–152 (ESQL…VKAS), 153–165 (GSQL…VKAS), 166–178 (GSQL…MKSS), 179–191 (GSQV…MKSS), 192–204 (GSQV…MKAS), 205–217 (ESQI…RKSQ), 224–236 (YGQM…TKSL), 237–249 (ESQA…VKSQ), 257–269 (YGQR…ETQL), 275–287 (DAQL…QKSQ), and 299–311 (SAQL…QKSL). A 13 X 13 AA tandem repeats region spans residues 108–311 (ESQIKSFRQV…LKSFGQQKSL (204 aa)). 3 disordered regions span residues 170-228 (KSYG…GQMK), 240-294 (AKSF…SFSQ), and 306-369 (GQQK…FGQE). Over residues 240 to 259 (AKSFGQVKSQSGQMKSSYGQ) the composition is skewed to polar residues. Over residues 277–294 (QLKSYGQQKSQKQSSFSQ) the composition is skewed to low complexity. Composition is skewed to polar residues over residues 306–321 (GQQK…TQQK) and 342–351 (SVQQKSTQQM). The span at 358–369 (SQFGQQRQFGQE) shows a compositional bias: low complexity.

In terms of processing, the repeating unit appears to be involved in the formation of the copulatory plug via a transglutaminase reaction cross-linking glutamine and lysine residues.

Functionally, the rat seminal vesicle contains six major androgen-dependent secretory proteins referred to as SVS I-VI. The SVS I-III proteins appear to be components of the rat copulatory plug, with the SVS II protein being the major component. This is Seminal vesicle secretory protein 2 (Svs2) from Rattus norvegicus (Rat).